An 86-amino-acid chain; its full sequence is Superoxide dismutase [Cu-Zn] (86 aa).

Residues 1–26 (AKEKGGKLTAGLAAGGHWNPNKAPHH) are disordered. Residues 7-16 (KLTAGLAAGG) show a composition bias toward low complexity. Histidine 17 contributes to the Cu cation binding site. Residues histidine 17, histidine 26, histidine 35, and aspartate 38 each coordinate Zn(2+). Histidine 73 provides a ligand contact to Cu cation.

It belongs to the Cu-Zn superoxide dismutase family. As to quaternary structure, homodimer. Cu cation serves as cofactor. Zn(2+) is required as a cofactor.

It localises to the periplasm. The enzyme catalyses 2 superoxide + 2 H(+) = H2O2 + O2. Its function is as follows. Destroys radicals which are normally produced within the cells and which are toxic to biological systems. This is Superoxide dismutase [Cu-Zn] (sodC) from Mannheimia haemolytica (Pasteurella haemolytica).